A 253-amino-acid chain; its full sequence is Probable transcriptional regulatory protein KRH_13670 (253 aa).

This sequence belongs to the TACO1 family.

It is found in the cytoplasm. The polypeptide is Probable transcriptional regulatory protein KRH_13670 (Kocuria rhizophila (strain ATCC 9341 / DSM 348 / NBRC 103217 / DC2201)).